Reading from the N-terminus, the 338-residue chain is Holliday junction branch migration complex subunit RuvB (338 aa).

The segment at Ala-4 to Tyr-187 is large ATPase domain (RuvB-L). Residues Leu-26, Arg-27, Gly-68, Lys-71, Thr-72, Thr-73, Glu-134–Phe-136, Arg-177, Tyr-187, and Arg-224 each bind ATP. Residue Thr-72 coordinates Mg(2+). Residues Ser-188–Gln-258 form a small ATPAse domain (RuvB-S) region. A head domain (RuvB-H) region spans residues Gln-261–His-338. Positions 316 and 321 each coordinate DNA.

The protein belongs to the RuvB family. As to quaternary structure, homohexamer. Forms an RuvA(8)-RuvB(12)-Holliday junction (HJ) complex. HJ DNA is sandwiched between 2 RuvA tetramers; dsDNA enters through RuvA and exits via RuvB. An RuvB hexamer assembles on each DNA strand where it exits the tetramer. Each RuvB hexamer is contacted by two RuvA subunits (via domain III) on 2 adjacent RuvB subunits; this complex drives branch migration. In the full resolvosome a probable DNA-RuvA(4)-RuvB(12)-RuvC(2) complex forms which resolves the HJ.

Its subcellular location is the cytoplasm. It carries out the reaction ATP + H2O = ADP + phosphate + H(+). Functionally, the RuvA-RuvB-RuvC complex processes Holliday junction (HJ) DNA during genetic recombination and DNA repair, while the RuvA-RuvB complex plays an important role in the rescue of blocked DNA replication forks via replication fork reversal (RFR). RuvA specifically binds to HJ cruciform DNA, conferring on it an open structure. The RuvB hexamer acts as an ATP-dependent pump, pulling dsDNA into and through the RuvAB complex. RuvB forms 2 homohexamers on either side of HJ DNA bound by 1 or 2 RuvA tetramers; 4 subunits per hexamer contact DNA at a time. Coordinated motions by a converter formed by DNA-disengaged RuvB subunits stimulates ATP hydrolysis and nucleotide exchange. Immobilization of the converter enables RuvB to convert the ATP-contained energy into a lever motion, pulling 2 nucleotides of DNA out of the RuvA tetramer per ATP hydrolyzed, thus driving DNA branch migration. The RuvB motors rotate together with the DNA substrate, which together with the progressing nucleotide cycle form the mechanistic basis for DNA recombination by continuous HJ branch migration. Branch migration allows RuvC to scan DNA until it finds its consensus sequence, where it cleaves and resolves cruciform DNA. In Lacticaseibacillus paracasei (strain ATCC 334 / BCRC 17002 / CCUG 31169 / CIP 107868 / KCTC 3260 / NRRL B-441) (Lactobacillus paracasei), this protein is Holliday junction branch migration complex subunit RuvB.